We begin with the raw amino-acid sequence, 428 residues long: Maltoporin (428 aa).

An N-terminal signal peptide occupies residues 1–21 (MKKTLLAVAIGGAMFATSAAA).

Belongs to the porin LamB (TC 1.B.3) family. As to quaternary structure, homotrimer formed of three 18-stranded antiparallel beta-barrels, containing three independent channels.

It is found in the cell outer membrane. It catalyses the reaction beta-maltose(in) = beta-maltose(out). Involved in the transport of maltose and maltodextrins. The chain is Maltoporin from Mannheimia succiniciproducens (strain KCTC 0769BP / MBEL55E).